A 443-amino-acid polypeptide reads, in one-letter code: Histidinol dehydrogenase (443 aa).

Tyr133, Gln191, and Asn214 together coordinate NAD(+). The substrate site is built by Ser240, Gln262, and His265. Zn(2+)-binding residues include Gln262 and His265. Active-site proton acceptor residues include Glu329 and His330. The substrate site is built by His330, Asp363, Glu417, and His422. Asp363 contacts Zn(2+). Residue His422 participates in Zn(2+) binding.

Belongs to the histidinol dehydrogenase family. Homodimer. Zn(2+) is required as a cofactor.

The enzyme catalyses L-histidinol + 2 NAD(+) + H2O = L-histidine + 2 NADH + 3 H(+). It functions in the pathway amino-acid biosynthesis; L-histidine biosynthesis; L-histidine from 5-phospho-alpha-D-ribose 1-diphosphate: step 9/9. In terms of biological role, catalyzes the sequential NAD-dependent oxidations of L-histidinol to L-histidinaldehyde and then to L-histidine. In Yersinia pestis, this protein is Histidinol dehydrogenase.